A 195-amino-acid polypeptide reads, in one-letter code: N-(5'-phosphoribosyl)anthranilate isomerase (195 aa).

Belongs to the TrpF family.

It carries out the reaction N-(5-phospho-beta-D-ribosyl)anthranilate = 1-(2-carboxyphenylamino)-1-deoxy-D-ribulose 5-phosphate. It participates in amino-acid biosynthesis; L-tryptophan biosynthesis; L-tryptophan from chorismate: step 3/5. The chain is N-(5'-phosphoribosyl)anthranilate isomerase from Streptococcus gordonii (strain Challis / ATCC 35105 / BCRC 15272 / CH1 / DL1 / V288).